Here is a 299-residue protein sequence, read N- to C-terminus: Ribosomal RNA small subunit methyltransferase H (299 aa).

S-adenosyl-L-methionine-binding positions include glycine 35–histidine 37, aspartate 54, tyrosine 80, aspartate 101, and glutamine 108.

It belongs to the methyltransferase superfamily. RsmH family.

Its subcellular location is the cytoplasm. The enzyme catalyses cytidine(1402) in 16S rRNA + S-adenosyl-L-methionine = N(4)-methylcytidine(1402) in 16S rRNA + S-adenosyl-L-homocysteine + H(+). In terms of biological role, specifically methylates the N4 position of cytidine in position 1402 (C1402) of 16S rRNA. The chain is Ribosomal RNA small subunit methyltransferase H from Coprothermobacter proteolyticus (strain ATCC 35245 / DSM 5265 / OCM 4 / BT).